The sequence spans 244 residues: MTLDLDANKKDDKILITTIQQEYKILAEYKMIESEKLGGIYTIPSLANSLQWFGVFFGRQGLYSESVFRFSLLLPDRFPDDKSLPTVIFQQNILHPHVCPYTNSLDISHAFPEWRCGEDHLWQLFKYMQAIFSDPIDSIRGIEMDKIKNPEAAELLLTNREEFAARVLENIKESKEHIYDPQPTEDPHYIVFEKFQPDVHGPVLERIKAGRNNQTDSTLQQTNGGTATGLSWVKEGEFKPLSIE.

The UBC core domain maps to 20–176 (QQEYKILAEY…VLENIKESKE (157 aa)).

It belongs to the ubiquitin-conjugating enzyme family. FTS subfamily.

The chain is Protein crossbronx (cbx) from Drosophila persimilis (Fruit fly).